A 150-amino-acid polypeptide reads, in one-letter code: Nascent polypeptide-associated complex subunit beta (150 aa).

Disordered stretches follow at residues 1 to 45 and 123 to 150; these read MADV…LQQS and YQNMQQKKDDDDEIPDLVAGESFENKVE. Over residues 23-32 the composition is skewed to basic residues; the sequence is TPRRKVKRAP. The region spanning 36–101 is the NAC-A/B domain; it reads GADDKKLQQS…GEDKELTELV (66 aa).

Belongs to the NAC-beta family. In terms of assembly, part of the nascent polypeptide-associated complex (NAC), consisting of EGD2 and EGD1. NAC associates with ribosomes via EGD1.

It is found in the cytoplasm. The protein resides in the nucleus. Its function is as follows. Component of the nascent polypeptide-associated complex (NAC), a dynamic component of the ribosomal exit tunnel, protecting the emerging polypeptides from interaction with other cytoplasmic proteins to ensure appropriate nascent protein targeting. The NAC complex also promotes mitochondrial protein import by enhancing productive ribosome interactions with the outer mitochondrial membrane and blocks the inappropriate interaction of ribosomes translating non-secretory nascent polypeptides with translocation sites in the membrane of the endoplasmic reticulum. EGD1 may act as a transcription factor that exert a negative effect on the expression of several genes that are transcribed by RNA polymerase II. The sequence is that of Nascent polypeptide-associated complex subunit beta (EGD1) from Chaetomium globosum (strain ATCC 6205 / CBS 148.51 / DSM 1962 / NBRC 6347 / NRRL 1970) (Soil fungus).